The sequence spans 709 residues: Golgin-84 (709 aa).

Topologically, residues 1–664 (MASWLKVAED…RATRFLWRHP (664 aa)) are cytoplasmic. Disordered stretches follow at residues 24–132 (TELS…VVDR), 144–195 (EVEV…NQDA), and 211–265 (EVIH…DQLE). The segment covering 29 to 43 (EQSSPQPSGSSSQEG) has biased composition (low complexity). Basic and acidic residues predominate over residues 78 to 89 (PPRERIKIEKIR). The segment covering 94-113 (VDSSSVDASASKPDVSSSDV) has biased composition (low complexity). Over residues 114–132 (KGLDDDGGAEKEEKVVVDR) the composition is skewed to basic and acidic residues. Positions 162 to 180 (DGAADSGNSEGAAESSAPS) are enriched in low complexity. 2 stretches are compositionally biased toward basic and acidic residues: residues 211–222 (EVIHEKNIKEVP) and 248–265 (QQEH…DQLE). Positions 287-592 (RVCAGLSSRL…AALEFQLEKS (306 aa)) form a coiled coil. A helical; Signal-anchor for type II membrane protein transmembrane segment spans residues 665–684 (VARVSLLFYLVFVHLFLMYL). The Lumenal portion of the chain corresponds to 685-707 (MHRLQDFASREGPTAMGGLANSD).

It is found in the golgi apparatus membrane. Functionally, may be involved in maintaining Golgi structure and in intra-Golgi transport. The chain is Golgin-84 from Oryza sativa subsp. japonica (Rice).